We begin with the raw amino-acid sequence, 364 residues long: Methylthioribose-1-phosphate isomerase (364 aa).

Aspartate 254 acts as the Proton donor in catalysis.

Belongs to the eIF-2B alpha/beta/delta subunits family. MtnA subfamily.

Its subcellular location is the cytoplasm. It is found in the nucleus. The catalysed reaction is 5-(methylsulfanyl)-alpha-D-ribose 1-phosphate = 5-(methylsulfanyl)-D-ribulose 1-phosphate. It participates in amino-acid biosynthesis; L-methionine biosynthesis via salvage pathway; L-methionine from S-methyl-5-thio-alpha-D-ribose 1-phosphate: step 1/6. In terms of biological role, catalyzes the interconversion of methylthioribose-1-phosphate (MTR-1-P) into methylthioribulose-1-phosphate (MTRu-1-P). The sequence is that of Methylthioribose-1-phosphate isomerase from Drosophila sechellia (Fruit fly).